Reading from the N-terminus, the 194-residue chain is Ancillary SecYEG translocon subunit (194 aa).

Residues 1–10 are Cytoplasmic-facing; that stretch reads MHLNKMKKVS. Residues 11 to 31 form a helical membrane-spanning segment; that stretch reads LKTYLVLFFLIFFIFCSFWFI. Topologically, residues 32 to 194 are periplasmic; the sequence is KPKEKKLKLE…INMKINEIKR (163 aa).

The protein belongs to the YfgM family. In terms of assembly, interacts with the SecYEG translocon. Forms a complex with PpiD.

The protein resides in the cell inner membrane. Functionally, may mediate protein transfer from the SecYEG translocon to the periplasmic chaperone network via its periplasmic C-terminal region. The sequence is that of Ancillary SecYEG translocon subunit from Buchnera aphidicola subsp. Schizaphis graminum (strain Sg).